The primary structure comprises 448 residues: Chromogranin-A (448 aa).

The signal sequence occupies residues 1 to 18; the sequence is MRSAVVLALLLCAGQVIA. A disulfide bond links Cys-35 and Cys-56. A disordered region spans residues 116 to 251; it reads LKEVTEEALS…AFNPHPSLSY (136 aa). Composition is skewed to basic and acidic residues over residues 129–139 and 158–175; these read AEARGDSKEVE and QESR…KEAI. At Ser-197 the chain carries Phosphoserine. Residues 205–222 are compositionally biased toward basic and acidic residues; the sequence is VDREKGLGAERGQQAKRE. Residues 223–238 show a composition bias toward acidic residues; it reads EEEDEAGEKADAEEEG. Phosphoserine is present on residues Ser-258 and Ser-288. The segment at 263–429 is disordered; it reads LVVDGARKTG…PEDQELESLS (167 aa). Gly-308 carries the glycine amide modification. Positions 310 to 350 are enriched in basic and acidic residues; sequence KSRELEQEKEQERLSKEWEDAKRWSKMDQLAKELTAEKRLE. A phosphoserine mark is found at Ser-311, Ser-324, and Ser-362. The residue at position 363 (Met-363) is a Methionine sulfoxide. Ser-389, Ser-393, Ser-415, and Ser-429 each carry phosphoserine. Over residues 405–422 the composition is skewed to basic and acidic residues; that stretch reads YPEEKKEEEGSANRRPED. Ser-415 carries O-linked (Xyl...) (chondroitin sulfate) serine glycosylation.

Belongs to the chromogranin/secretogranin protein family. As to quaternary structure, self-interacts; self-assembly is promoted in vitro by chondroitin sulfate attachment which occurs at mildly acidic pH conditions. Interacts with SCG3. Interacts with ITPR1 in the secretory granules. O-glycosylated; contains chondroitin sulfate (CS). CS attachment is pH-dependent, being observed at mildly acidic conditions of pH 5 but not at neutral pH, and promotes self-assembly in vitro. As to expression, highly expressed in adrenal medulla and pituitary gland. Weaker expression detected in cerebrum, cerebellum, spinal cord, liver, thyroid gland, striated muscle, lung, spleen, kidney, parotid gland, and sublingual gland.

Its subcellular location is the secreted. It localises to the cytoplasmic vesicle. The protein localises to the secretory vesicle. The protein resides in the neuronal dense core vesicle. Functionally, strongly inhibits glucose induced insulin release from the pancreas. In terms of biological role, inhibits catecholamine release from chromaffin cells and noradrenergic neurons by acting as a non-competitive nicotinic cholinergic antagonist. Can induce mast cell migration, degranulation and production of cytokines and chemokines. Its function is as follows. Regulates granule biogenesis in endocrine cells by up-regulating the transcription of protease nexin 1 (SERPINE2) via a cAMP-PKA-SP1 pathway. This leads to inhibition of granule protein degradation in the Golgi complex which in turn promotes granule formation. In Equus caballus (Horse), this protein is Chromogranin-A (CHGA).